Reading from the N-terminus, the 246-residue chain is Bis(5'-nucleosyl)-tetraphosphatase PrpE [asymmetrical] (246 aa).

It belongs to the PrpE family. The cofactor is Ni(2+).

It carries out the reaction P(1),P(4)-bis(5'-guanosyl) tetraphosphate + H2O = GMP + GTP + 2 H(+). In terms of biological role, asymmetrically hydrolyzes Ap4p to yield AMP and ATP. This chain is Bis(5'-nucleosyl)-tetraphosphatase PrpE [asymmetrical], found in Bacillus thuringiensis (strain Al Hakam).